The sequence spans 73 residues: Translation initiation factor IF-1 (73 aa).

Residues 1–72 (MPKKDAIEVE…TRGRVTYRFK (72 aa)) form the S1-like domain.

It belongs to the IF-1 family. As to quaternary structure, component of the 30S ribosomal translation pre-initiation complex which assembles on the 30S ribosome in the order IF-2 and IF-3, IF-1 and N-formylmethionyl-tRNA(fMet); mRNA recruitment can occur at any time during PIC assembly.

The protein resides in the cytoplasm. One of the essential components for the initiation of protein synthesis. Stabilizes the binding of IF-2 and IF-3 on the 30S subunit to which N-formylmethionyl-tRNA(fMet) subsequently binds. Helps modulate mRNA selection, yielding the 30S pre-initiation complex (PIC). Upon addition of the 50S ribosomal subunit IF-1, IF-2 and IF-3 are released leaving the mature 70S translation initiation complex. This is Translation initiation factor IF-1 from Dehalococcoides mccartyi (strain ATCC BAA-2266 / KCTC 15142 / 195) (Dehalococcoides ethenogenes (strain 195)).